Here is a 354-residue protein sequence, read N- to C-terminus: 3-isopropylmalate dehydrogenase (354 aa).

Residue 76 to 87 (GPRWDGAKERPE) coordinates NAD(+). The substrate site is built by Arg94, Arg104, Arg130, and Asp215. 3 residues coordinate Mg(2+): Asp215, Asp239, and Asp243. 273–285 (GSAPDIAGKNKAN) is an NAD(+) binding site.

This sequence belongs to the isocitrate and isopropylmalate dehydrogenases family. LeuB type 1 subfamily. As to quaternary structure, homodimer. The cofactor is Mg(2+). Requires Mn(2+) as cofactor.

Its subcellular location is the cytoplasm. The catalysed reaction is (2R,3S)-3-isopropylmalate + NAD(+) = 4-methyl-2-oxopentanoate + CO2 + NADH. It functions in the pathway amino-acid biosynthesis; L-leucine biosynthesis; L-leucine from 3-methyl-2-oxobutanoate: step 3/4. In terms of biological role, catalyzes the oxidation of 3-carboxy-2-hydroxy-4-methylpentanoate (3-isopropylmalate) to 3-carboxy-4-methyl-2-oxopentanoate. The product decarboxylates to 4-methyl-2 oxopentanoate. The sequence is that of 3-isopropylmalate dehydrogenase from Bacillus anthracis.